A 295-amino-acid polypeptide reads, in one-letter code: MSNSQSKKIFGLIGKHVDYSWSPLIHNTGFEALGLPCVYTIFNIPSPEMIGDALKGSRALGIAGFSVTIPYKKTVVPFLDELSPEALSIGAVNTIVNDNGRLLGYNTDIDGFAAPLLPMAESIRNRPVCIFGNGGAALAAVEAFRLRFNPSSVLLVVRDTQKAEDMLEEYAYRDLVTIHAGREIDQPACSKLIRDCRVLVNATPVGTAGRNDHIHSILPTGHGLLHDGQIVYDMVYNPPETPLLAEARAAGATVIAGIEMLIAQAARAFSIWTGQELPVDLVRKTVLAAIEKSEG.

Shikimate is bound by residues 20 to 22 (SWS) and threonine 68. Lysine 72 functions as the Proton acceptor in the catalytic mechanism. Residues asparagine 93 and aspartate 108 each coordinate shikimate. NADP(+)-binding positions include 132 to 136 (GNGGA) and methionine 234. Position 236 (tyrosine 236) interacts with shikimate. Glycine 257 provides a ligand contact to NADP(+).

This sequence belongs to the shikimate dehydrogenase family. Homodimer.

The enzyme catalyses shikimate + NADP(+) = 3-dehydroshikimate + NADPH + H(+). The protein operates within metabolic intermediate biosynthesis; chorismate biosynthesis; chorismate from D-erythrose 4-phosphate and phosphoenolpyruvate: step 4/7. Functionally, involved in the biosynthesis of the chorismate, which leads to the biosynthesis of aromatic amino acids. Catalyzes the reversible NADPH linked reduction of 3-dehydroshikimate (DHSA) to yield shikimate (SA). This Chlorobaculum tepidum (strain ATCC 49652 / DSM 12025 / NBRC 103806 / TLS) (Chlorobium tepidum) protein is Shikimate dehydrogenase (NADP(+)).